The chain runs to 206 residues: Interleukin-24 (206 aa).

The first 51 residues, 1–51 (MNFQQRLQSLWTLARPFCPPLLATASQMQMVVLPCLGFTLLLWSQVSGAQG), serve as a signal peptide directing secretion. Residues Cys-59 and Cys-106 are joined by a disulfide bond. Asn-85 and Asn-99 each carry an N-linked (GlcNAc...) asparagine glycan. Lys-122 is covalently cross-linked (Glycyl lysine isopeptide (Lys-Gly) (interchain with G-Cter in ubiquitin)). A glycan (N-linked (GlcNAc...) asparagine) is linked at Asn-126.

The protein belongs to the IL-10 family. In terms of processing, glycosylated. Ubiquitination at Lys-122 promotes proteasomal degradation. In terms of tissue distribution, up-regulated in melanoma cells induced to terminally differentiate.

The protein localises to the secreted. In terms of biological role, multifunctional cytokine mainly produced by T-cells that plays a regulatory role in immune response, tissue homeostasis, host defense, and oncogenesis. Possesses antiviral functions and induces the type I interferon response during influenza infection. Signals through two receptor complexes IL20RA/IL20RB or IL20RB/IL22RA1. In turn, stimulates the JAK1-STAT3 and MAPK pathways and promotes the secretion of pro-inflammatory mediators including IL8 and MMP1. Intracellularly, maintains endoplasmic reticulum homeostasis by restricting the eIF2alpha-CHOP pathway-mediated stress signal. In addition, acts as a quality control mechanism for the ubiquitin proteasome system by alerting the cell to proteasome dysfunction through activation of PKR/EIF2AK2. The sequence is that of Interleukin-24 (IL24) from Homo sapiens (Human).